Consider the following 819-residue polypeptide: Probable phosphoenolpyruvate synthase (819 aa).

The active-site Tele-phosphohistidine intermediate is His-441. The substrate site is built by Arg-540, Arg-587, Glu-684, Gly-706, Thr-707, Asn-708, and Asp-709. Residue Glu-684 coordinates Mg(2+). Mg(2+) is bound at residue Asp-709. The Proton donor role is filled by Cys-756.

This sequence belongs to the PEP-utilizing enzyme family. The cofactor is Mg(2+).

It carries out the reaction pyruvate + ATP + H2O = phosphoenolpyruvate + AMP + phosphate + 2 H(+). The protein operates within carbohydrate biosynthesis; gluconeogenesis. Functionally, catalyzes the phosphorylation of pyruvate to phosphoenolpyruvate. The sequence is that of Probable phosphoenolpyruvate synthase (ppsA) from Pyrococcus abyssi (strain GE5 / Orsay).